The chain runs to 175 residues: Peptide deformylase (175 aa).

C96 and H138 together coordinate Fe cation. E139 is a catalytic residue. H142 lines the Fe cation pocket.

The protein belongs to the polypeptide deformylase family. Requires Fe(2+) as cofactor.

The catalysed reaction is N-terminal N-formyl-L-methionyl-[peptide] + H2O = N-terminal L-methionyl-[peptide] + formate. In terms of biological role, removes the formyl group from the N-terminal Met of newly synthesized proteins. Requires at least a dipeptide for an efficient rate of reaction. N-terminal L-methionine is a prerequisite for activity but the enzyme has broad specificity at other positions. This chain is Peptide deformylase, found in Campylobacter jejuni subsp. jejuni serotype O:2 (strain ATCC 700819 / NCTC 11168).